Consider the following 100-residue polypeptide: Urease subunit gamma (100 aa).

It belongs to the urease gamma subunit family. Heterotrimer of UreA (gamma), UreB (beta) and UreC (alpha) subunits. Three heterotrimers associate to form the active enzyme.

Its subcellular location is the cytoplasm. The catalysed reaction is urea + 2 H2O + H(+) = hydrogencarbonate + 2 NH4(+). It functions in the pathway nitrogen metabolism; urea degradation; CO(2) and NH(3) from urea (urease route): step 1/1. The protein is Urease subunit gamma of Mycolicibacterium gilvum (strain PYR-GCK) (Mycobacterium gilvum (strain PYR-GCK)).